The primary structure comprises 360 residues: Peptide chain release factor 1 (360 aa).

Residue Q235 is modified to N5-methylglutamine. Residues 283–308 (MQKRQQAEASERRNLLGSGDRSDRNR) are compositionally biased toward basic and acidic residues. Positions 283-313 (MQKRQQAEASERRNLLGSGDRSDRNRTYNFP) are disordered.

The protein belongs to the prokaryotic/mitochondrial release factor family. Post-translationally, methylated by PrmC. Methylation increases the termination efficiency of RF1.

Its subcellular location is the cytoplasm. Its function is as follows. Peptide chain release factor 1 directs the termination of translation in response to the peptide chain termination codons UAG and UAA. This Yersinia enterocolitica serotype O:8 / biotype 1B (strain NCTC 13174 / 8081) protein is Peptide chain release factor 1.